A 217-amino-acid chain; its full sequence is GTPase IMAP family member GIMD1 (217 aa).

Residues Lys6 to Lys217 enclose the AIG1-type G domain. Residues Gly15–Ser23, Ser36, and His148–Glu150 each bind GTP.

This sequence belongs to the TRAFAC class TrmE-Era-EngA-EngB-Septin-like GTPase superfamily. AIG1/Toc34/Toc159-like paraseptin GTPase family. IAN subfamily.

This Homo sapiens (Human) protein is GTPase IMAP family member GIMD1 (GIMD1).